Reading from the N-terminus, the 204-residue chain is Wound-induced proteinase inhibitor 2 (204 aa).

Positions 1–25 (MAVPKEVSFLASLLVLGILLLHVDA) are cleaved as a signal peptide. 3 tandem repeats follow at residues 25 to 67 (AKAC…DPNN), 68 to 125 (PKPC…DPNN), and 126 to 183 (PKPC…DPNH). Cystine bridges form between C28–C100, C38–C75, C41–C59, C42–C71, C48–C84, and C99–C117. The stretch at 184-204 (PKACPKNCDPNIAYSLCLYEK) is one 4; truncated repeat.

Belongs to the protease inhibitor I20 (potato type II proteinase inhibitor) family.

The sequence is that of Wound-induced proteinase inhibitor 2 (PIN2) from Capsicum annuum (Capsicum pepper).